Here is a 348-residue protein sequence, read N- to C-terminus: 4-hydroxy-2-oxovalerate aldolase 2 (348 aa).

One can recognise a Pyruvate carboxyltransferase domain in the interval 5–256 (LQICDSTLRD…EARIKLFDAL (252 aa)). 13 to 14 (RD) is a substrate binding site. Residue aspartate 14 coordinates Mn(2+). Residue histidine 17 is the Proton acceptor of the active site. Substrate-binding residues include serine 168 and histidine 195. Mn(2+) contacts are provided by histidine 195 and histidine 197.

It belongs to the 4-hydroxy-2-oxovalerate aldolase family.

It catalyses the reaction (S)-4-hydroxy-2-oxopentanoate = acetaldehyde + pyruvate. In Salinispora arenicola (strain CNS-205), this protein is 4-hydroxy-2-oxovalerate aldolase 2.